The primary structure comprises 87 residues: Mu-conotoxin cal12b (87 aa).

Residues 1 to 19 form the signal peptide; sequence MKLTCVLVVLLLLLPYGDL. A propeptide spanning residues 20 to 42 is cleaved from the precursor; that stretch reads ITNNYIRGAARKVTPWRRNLKTR. 4 cysteine pairs are disulfide-bonded: Cys-45/Cys-58, Cys-53/Cys-70, Cys-60/Cys-75, and Cys-69/Cys-81. The residue at position 59 (Trp-59) is a 6'-bromotryptophan. At Pro-65 the chain carries 4-hydroxyproline. Trp-79 and Trp-80 each carry 6'-bromotryptophan. A 4-hydroxyproline modification is found at Pro-82. 6'-bromotryptophan is present on Trp-86.

As to expression, expressed by the venom duct.

Its subcellular location is the secreted. In terms of biological role, mu-conotoxins block voltage-gated sodium channels. This toxin reversibly blocks voltage-gated sodium channel in cephalopods (tested on squid giant-fiber-lobe neurons) with an inhibitor constant (Ki) of 15 nmol/l, with no alteration in the voltage dependence of sodium conductance or on the kinetics of inactivation. Has no effect on sodium channels of the two gastropod S.luhuanus and A.californica (which are not natural prey). In Californiconus californicus (California cone), this protein is Mu-conotoxin cal12b.